We begin with the raw amino-acid sequence, 780 residues long: RNA-binding protein Pasilla (780 aa).

Disordered regions lie at residues 31 to 50 (LQHQ…QQLE), 76 to 113 (QPRH…SSSI), and 150 to 190 (QIES…ATAS). Low complexity-rich tracts occupy residues 79–91 (HSTT…STHS), 99–113 (SSNS…SSSI), and 176–190 (PNGT…ATAS). 3 consecutive KH domains span residues 273–340 (TYHM…MEFI), 366–432 (DKQV…CKMI), and 691–758 (KDSK…QYLI). Residues 674–693 (AQLGGLSKSPTPGDLSSKDS) form a disordered region. Positions 686–776 (GDLSSKDSKN…TKRARQIPLT (91 aa)) are required for RNA binding.

Expressed in the central nervous system in mushroom body neurons (at protein level).

The protein resides in the nucleus. Its subcellular location is the cytoplasm. Functions to regulate alternative splicing in neurons by binding pre-mRNA in a sequence-specific manner to activate exon inclusion. Plays a role in long-term memory formation by processing the unspliced Orb2-isoform A (Orb2A) mRNA and thereby controlling Orb2A protein abundance. In Drosophila melanogaster (Fruit fly), this protein is RNA-binding protein Pasilla.